The primary structure comprises 93 residues: Cell division protein FtsB (93 aa).

The Cytoplasmic segment spans residues Met1 to Val3. The chain crosses the membrane as a helical span at residues Thr4–Phe21. Residues Gly22–Pro93 are Periplasmic-facing. A coiled-coil region spans residues Asp28–Leu75.

It belongs to the FtsB family. As to quaternary structure, part of a complex composed of FtsB, FtsL and FtsQ.

The protein localises to the cell inner membrane. Its function is as follows. Essential cell division protein. May link together the upstream cell division proteins, which are predominantly cytoplasmic, with the downstream cell division proteins, which are predominantly periplasmic. The polypeptide is Cell division protein FtsB (Idiomarina loihiensis (strain ATCC BAA-735 / DSM 15497 / L2-TR)).